Here is a 947-residue protein sequence, read N- to C-terminus: Pyruvate, phosphate dikinase 1, chloroplastic (947 aa).

The transit peptide at 1 to 62 (MAASVSRAIC…GRGQHCSPLR (62 aa)) directs the protein to the chloroplast. The disordered stretch occupies residues 21 to 54 (DREATSFARRSVAAPRPPHAKAAGVIRSDSGAGR). At Ala-63 the chain carries N-acetylalanine; partial. Phosphothreonine is present on Thr-309. The residue at position 506 (Ser-506) is a Phosphoserine. Phosphothreonine; by PDRP1 is present on Thr-527. At Ser-528 the chain carries Phosphoserine; by PDRP1. His-529 serves as the catalytic Tele-phosphohistidine intermediate. Residues Arg-635, Arg-692, Glu-821, Gly-842, Thr-843, Asn-844, and Asp-845 each coordinate substrate. Residue Glu-821 participates in Mg(2+) binding. Asp-845 serves as a coordination point for Mg(2+). Cys-907 acts as the Proton donor in catalysis.

The protein belongs to the PEP-utilizing enzyme family. As to quaternary structure, homotetramer. Mg(2+) is required as a cofactor. In terms of processing, phosphorylation of Thr-527 in the dark inactivates the enzyme, dephosphorylation upon light stimulation reactivates the enzyme. More highly phosphorylated when grown under high rather than low light regimes (70 vs 900 umol photons/m-2/s). the degree of phosphorylation is strictly regulated by light intensity and the light/dark transition has no influence. Phosphorylated in both mesophyll and bundle sheath cells. The phosphorylation at Ser-528 may be important for the phosphorylation at Thr-527 and may also be regulated by light intensity. As to expression, isoform C4PPDKZM1 mainly localized in mesophyll cells and only a low level is found in bundle sheath cells. Isoform CYPPDKZM1 expressed in roots, stems and etiolated leaves.

It localises to the plastid. The protein localises to the chloroplast. Its subcellular location is the cytoplasm. It catalyses the reaction pyruvate + phosphate + ATP = phosphoenolpyruvate + AMP + diphosphate + H(+). Its pathway is photosynthesis; C4 acid pathway. Its activity is regulated as follows. Activated by light-induced dephosphorylation. Inhibited by dark-induced phosphorylation. Both reactions are catalyzed by PDRP1. Inactivated by cold due to the dissociation of the homotetramer. Independent of circadian regulation. Formation of phosphoenolpyruvate, which is the primary acceptor of CO(2) in C4 and some Crassulacean acid metabolism plants. The chain is Pyruvate, phosphate dikinase 1, chloroplastic from Zea mays (Maize).